We begin with the raw amino-acid sequence, 284 residues long: 4-diphosphocytidyl-2-C-methyl-D-erythritol kinase (284 aa).

The active site involves lysine 14. 98–108 (PMGGGLGGGSS) is an ATP binding site. Aspartate 140 is an active-site residue.

It belongs to the GHMP kinase family. IspE subfamily.

It catalyses the reaction 4-CDP-2-C-methyl-D-erythritol + ATP = 4-CDP-2-C-methyl-D-erythritol 2-phosphate + ADP + H(+). Its pathway is isoprenoid biosynthesis; isopentenyl diphosphate biosynthesis via DXP pathway; isopentenyl diphosphate from 1-deoxy-D-xylulose 5-phosphate: step 3/6. In terms of biological role, catalyzes the phosphorylation of the position 2 hydroxy group of 4-diphosphocytidyl-2C-methyl-D-erythritol. This chain is 4-diphosphocytidyl-2-C-methyl-D-erythritol kinase, found in Shewanella putrefaciens (strain CN-32 / ATCC BAA-453).